The chain runs to 263 residues: uncharacterized protein (263 aa).

31–38 (GPTGSGKT) contributes to the ATP binding site.

It belongs to the CbbQ/NirQ/NorQ/GpvN family.

This is an uncharacterized protein from Staphylococcus aureus (strain USA300).